We begin with the raw amino-acid sequence, 524 residues long: Probable malate:quinone oxidoreductase (524 aa).

Belongs to the MQO family. FAD serves as cofactor.

It catalyses the reaction (S)-malate + a quinone = a quinol + oxaloacetate. Its pathway is carbohydrate metabolism; tricarboxylic acid cycle; oxaloacetate from (S)-malate (quinone route): step 1/1. The chain is Probable malate:quinone oxidoreductase from Blochmanniella floridana.